An 87-amino-acid chain; its full sequence is Small ribosomal subunit protein bS20 (87 aa).

Positions 1–22 (MANIKSQIKRIGTNKKAQERNK) are disordered.

Belongs to the bacterial ribosomal protein bS20 family.

In terms of biological role, binds directly to 16S ribosomal RNA. In Clavibacter sepedonicus (Clavibacter michiganensis subsp. sepedonicus), this protein is Small ribosomal subunit protein bS20.